Consider the following 233-residue polypeptide: Leucyl/phenylalanyl-tRNA--protein transferase (233 aa).

Belongs to the L/F-transferase family.

The protein resides in the cytoplasm. It catalyses the reaction N-terminal L-lysyl-[protein] + L-leucyl-tRNA(Leu) = N-terminal L-leucyl-L-lysyl-[protein] + tRNA(Leu) + H(+). The enzyme catalyses N-terminal L-arginyl-[protein] + L-leucyl-tRNA(Leu) = N-terminal L-leucyl-L-arginyl-[protein] + tRNA(Leu) + H(+). The catalysed reaction is L-phenylalanyl-tRNA(Phe) + an N-terminal L-alpha-aminoacyl-[protein] = an N-terminal L-phenylalanyl-L-alpha-aminoacyl-[protein] + tRNA(Phe). Its function is as follows. Functions in the N-end rule pathway of protein degradation where it conjugates Leu, Phe and, less efficiently, Met from aminoacyl-tRNAs to the N-termini of proteins containing an N-terminal arginine or lysine. This chain is Leucyl/phenylalanyl-tRNA--protein transferase, found in Anaeromyxobacter dehalogenans (strain 2CP-1 / ATCC BAA-258).